A 192-amino-acid chain; its full sequence is Phosphoheptose isomerase (192 aa).

The region spanning 37-192 is the SIS domain; it reads LADSFKAGGK…IQLIEKEMVK (156 aa). Substrate is bound at residue 52–54; the sequence is NGG. Zn(2+) contacts are provided by histidine 61 and glutamate 65. Substrate-binding positions include glutamate 65, 93–94, 119–121, serine 124, and glutamine 172; these read ND and STS. Glutamine 172 and histidine 180 together coordinate Zn(2+).

It belongs to the SIS family. GmhA subfamily. As to quaternary structure, homotetramer. Zn(2+) serves as cofactor.

It localises to the cytoplasm. The catalysed reaction is 2 D-sedoheptulose 7-phosphate = D-glycero-alpha-D-manno-heptose 7-phosphate + D-glycero-beta-D-manno-heptose 7-phosphate. It functions in the pathway carbohydrate biosynthesis; D-glycero-D-manno-heptose 7-phosphate biosynthesis; D-glycero-alpha-D-manno-heptose 7-phosphate and D-glycero-beta-D-manno-heptose 7-phosphate from sedoheptulose 7-phosphate: step 1/1. Catalyzes the isomerization of sedoheptulose 7-phosphate in D-glycero-D-manno-heptose 7-phosphate. This chain is Phosphoheptose isomerase, found in Salmonella agona (strain SL483).